A 59-amino-acid polypeptide reads, in one-letter code: MRQLKGKPKKETSRDKKERKQAMQEARRQITTVVLPTLAVVVLLIVVFVYVATRPASTE.

The interval 1–27 (MRQLKGKPKKETSRDKKERKQAMQEAR) is disordered. Over residues 9 to 27 (KKETSRDKKERKQAMQEAR) the composition is skewed to basic and acidic residues. The stretch at 9 to 31 (KKETSRDKKERKQAMQEARRQIT) forms a coiled coil. The helical transmembrane segment at 32–52 (TVVLPTLAVVVLLIVVFVYVA) threads the bilayer.

This sequence belongs to the SMCO4 family.

It is found in the membrane. The polypeptide is Single-pass membrane and coiled-coil domain-containing protein 4 (SMCO4) (Bos taurus (Bovine)).